The primary structure comprises 293 residues: NAD kinase (293 aa).

D73 (proton acceptor) is an active-site residue. Residues 73–74, 147–148, R175, D177, and 188–193 each bind NAD(+); these read DG, NE, and TAYSMS.

Belongs to the NAD kinase family. A divalent metal cation serves as cofactor.

The protein resides in the cytoplasm. The catalysed reaction is NAD(+) + ATP = ADP + NADP(+) + H(+). In terms of biological role, involved in the regulation of the intracellular balance of NAD and NADP, and is a key enzyme in the biosynthesis of NADP. Catalyzes specifically the phosphorylation on 2'-hydroxyl of the adenosine moiety of NAD to yield NADP. The chain is NAD kinase from Colwellia psychrerythraea (strain 34H / ATCC BAA-681) (Vibrio psychroerythus).